The primary structure comprises 1277 residues: NPC intracellular cholesterol transporter 1 (1277 aa).

An N-terminal signal peptide occupies residues 1–22; it reads MGAHHPALGLLLLLLCPAQVFS. The Lumenal segment spans residues 23 to 269; that stretch reads QSCVWYGECG…WRIWGLDAMY (247 aa). Disulfide bonds link cysteine 25–cysteine 74, cysteine 31–cysteine 42, cysteine 63–cysteine 109, cysteine 75–cysteine 113, cysteine 97–cysteine 238, cysteine 100–cysteine 160, cysteine 177–cysteine 184, cysteine 227–cysteine 243, and cysteine 240–cysteine 247. Position 41 (asparagine 41) interacts with cholesterol. N-linked (GlcNAc...) asparagine glycosylation is present at asparagine 70. Residue glutamine 79 coordinates cholesterol. N-linked (GlcNAc...) asparagine glycosylation is found at asparagine 122 and asparagine 137. The segment at 175-205 is important for cholesterol binding and cholesterol transfer from NPC1 to liposomes; that stretch reads LLCGRDARACNATNWIEYMFNKDNGQAPFTI. 3 N-linked (GlcNAc...) asparagine glycosylation sites follow: asparagine 185, asparagine 222, and asparagine 228. Residues 270 to 290 form a helical membrane-spanning segment; it reads VIMWVTYVAFLFVFFGALLAV. Residues 291–350 lie on the Cytoplasmic side of the membrane; the sequence is WCHRRRYFVSEYTPIDSNIAFSVNSSDKGEASCCDPLGAAFDDCLRRMFTKWGAFCVRNP. The helical transmembrane segment at 351–371 threads the bilayer; sequence TCIIFFSLAFITVCSSGLVFV. At 372 to 621 the chain is on the lumenal side; the sequence is QVTTNPVELW…ELNRESNSDV (250 aa). Residues asparagine 414, asparagine 459, asparagine 478, and asparagine 524 are each glycosylated (N-linked (GlcNAc...) asparagine). 2 disulfides stabilise this stretch: cysteine 468–cysteine 479 and cysteine 516–cysteine 533. The 166-residue stretch at 620–785 folds into the SSD domain; the sequence is DVFTVIISYV…ITCFVSLLGL (166 aa). Residues 622-642 traverse the membrane as a helical segment; sequence FTVIISYVVMFLYISLALGHI. Over 643 to 653 the chain is Cytoplasmic; that stretch reads QSCSRLLVDSK. A helical membrane pass occupies residues 654-674; it reads ISLGIAGILIVLSSVACSLGI. Residues 675–683 are Lumenal-facing; sequence FSYMGMPLT. The helical transmembrane segment at 684-704 threads the bilayer; the sequence is LIVIEVIPFLVLAVGVDNIFI. Residues 705-730 lie on the Cytoplasmic side of the membrane; it reads LVQTYQRDERLQEETLDQQLGRILGE. Residues 731-751 traverse the membrane as a helical segment; sequence VAPTMFLSSFSETSAFFFGAL. The Lumenal segment spans residues 752 to 759; sequence SSMPAVHT. The chain crosses the membrane as a helical span at residues 760-780; it reads FSLFAGMAVLIDFLLQITCFV. Residues 781 to 832 are Cytoplasmic-facing; it reads SLLGLDIKRQEKNHLDILCCVRGADDGQGSHASESYLFRFFKNYFAPLLLKD. Residues 833–853 traverse the membrane as a helical segment; the sequence is WLRPIVVAVFVGVLSFSVAVV. At 854-1097 the chain is on the lumenal side; that stretch reads NKVDIGLDQS…EQYLTIIDDT (244 aa). N-linked (GlcNAc...) asparagine glycosylation is found at asparagine 868 and asparagine 898. Cysteines 909 and 914 form a disulfide. N-linked (GlcNAc...) asparagine glycans are attached at residues asparagine 916, asparagine 961, asparagine 968, and asparagine 1063. 3 disulfides stabilise this stretch: cysteine 956–cysteine 1011, cysteine 957–cysteine 979, and cysteine 967–cysteine 976. Residues 1098–1118 form a helical membrane-spanning segment; that stretch reads IFNLSVSLGSIFLVTLVVLGC. The Cytoplasmic portion of the chain corresponds to 1119–1123; it reads ELWSA. The helical transmembrane segment at 1124–1144 threads the bilayer; it reads VIMCITIAMILVNMFGVMWLW. A topological domain (lumenal) is located at residue glycine 1145. The helical transmembrane segment at 1146-1166 threads the bilayer; it reads ISLNAVSLVNLVMSCGISVEF. Over 1167-1194 the chain is Cytoplasmic; sequence CSHITRAFTMSTKGSRVSRAEEALAHMG. Residues 1195–1215 traverse the membrane as a helical segment; that stretch reads SSVFSGITLTKFGGIVVLAFA. Residues 1216–1226 lie on the Lumenal side of the membrane; it reads KSQIFEIFYFR. Residues 1227-1247 form a helical membrane-spanning segment; it reads MYLAMVLLGATHGLIFLPVLL. Residues 1248–1277 lie on the Cytoplasmic side of the membrane; the sequence is SYIGPSVNKAKRHTTYERYRGTERERLLNF. Residues 1274 to 1277 form a required for location in lysosomes region; that stretch reads LLNF. A Di-leucine motif motif is present at residues 1274–1277; that stretch reads LLNF.

The protein belongs to the patched family. Interacts (via the second lumenal domain) with NPC2. Interacts with TMEM97; the interaction may decrease NPC1 availability to the cell. Interacts with TIM1. Interacts with SLC38A9; this interaction inhibits cholesterol-mediated mTORC1 activation via its sterol transport activity. Post-translationally, N-glycosylated. In terms of tissue distribution, detected in liver (at protein level). Ubiquitous. Detected in adult heart, spleen, lung, liver, skeletal muscle, kidney, testis.

It is found in the late endosome membrane. Its subcellular location is the lysosome membrane. The catalysed reaction is cholesterol(in) = cholesterol(out). Intracellular cholesterol transporter which acts in concert with NPC2 and plays an important role in the egress of cholesterol from the endosomal/lysosomal compartment. Unesterified cholesterol that has been released from LDLs in the lumen of the late endosomes/lysosomes is transferred by NPC2 to the cholesterol-binding pocket in the N-terminal domain of NPC1. Cholesterol binds to NPC1 with the hydroxyl group buried in the binding pocket. May play a role in vesicular trafficking in glia, a process that may be crucial for maintaining the structural and functional integrity of nerve terminals. Inhibits cholesterol-mediated mTORC1 activation throught its interaction with SLC38A9. This is NPC intracellular cholesterol transporter 1 from Mus musculus (Mouse).